The sequence spans 347 residues: MKNTFNTSVFANAYSFWGYVIGFILSTSNRLYIGWFGILMFPLLVLATVAFISAFIFAPPVDIDGIREPVAGALLYGNNIISGAVIPSSNAIGVHFYPVWEALGFDEWLYNGGTYQFVVLHFILGAGAYMGREWEFAFRLGMRPWIFVAFSAPLVAASAVFVVYPIGQGSFSDGMPLGISGTFNFMLVFQAEHNILMHPFHILGVAAVFGGSLFSAMHGSLVTSSLLAETAGDLSLNVGYNFGQEDETYSISAAHGYFGRLIFQYASFNNSRSLHFFLAAWPVIGIWFTALGVSTMAFNLNGLNFNQSIIDSSGHLINSWADIVNRADLGMEVMHERNAHNFPLDLA.

The next 3 helical transmembrane spans lie at 32–49 (YIGW…LATV), 121–136 (HFIL…EWEF), and 145–159 (WIFV…AASA). His-121 is a chlorophyll a binding site. Tyr-129 lines the pheophytin a pocket. [CaMn4O5] cluster contacts are provided by Asp-173 and Glu-192. The helical transmembrane segment at 200-221 (FHILGVAAVFGGSLFSAMHGSL) threads the bilayer. Residue His-201 coordinates chlorophyll a. A quinone is bound by residues His-218 and 267 to 268 (SF). His-218 contacts Fe cation. His-275 is a Fe cation binding site. The helical transmembrane segment at 277-291 (FLAAWPVIGIWFTAL) threads the bilayer. His-335, Glu-336, Asp-345, and Ala-347 together coordinate [CaMn4O5] cluster.

Belongs to the reaction center PufL/M/PsbA/D family. In terms of assembly, PSII is composed of 1 copy each of membrane proteins PsbA, PsbB, PsbC, PsbD, PsbE, PsbF, PsbH, PsbI, PsbJ, PsbK, PsbL, PsbM, PsbT, PsbX, PsbY, PsbZ, Psb30/Ycf12, at least 3 peripheral proteins of the oxygen-evolving complex and a large number of cofactors. It forms dimeric complexes. Requires The D1/D2 heterodimer binds P680, chlorophylls that are the primary electron donor of PSII, and subsequent electron acceptors. It shares a non-heme iron and each subunit binds pheophytin, quinone, additional chlorophylls, carotenoids and lipids. D1 provides most of the ligands for the Mn4-Ca-O5 cluster of the oxygen-evolving complex (OEC). There is also a Cl(-1) ion associated with D1 and D2, which is required for oxygen evolution. The PSII complex binds additional chlorophylls, carotenoids and specific lipids. as cofactor. In terms of processing, tyr-164 forms a radical intermediate that is referred to as redox-active TyrZ, YZ or Y-Z.

It localises to the plastid. It is found in the chloroplast thylakoid membrane. It catalyses the reaction 2 a plastoquinone + 4 hnu + 2 H2O = 2 a plastoquinol + O2. In terms of biological role, photosystem II (PSII) is a light-driven water:plastoquinone oxidoreductase that uses light energy to abstract electrons from H(2)O, generating O(2) and a proton gradient subsequently used for ATP formation. It consists of a core antenna complex that captures photons, and an electron transfer chain that converts photonic excitation into a charge separation. The D1/D2 (PsbA/PsbD) reaction center heterodimer binds P680, the primary electron donor of PSII as well as several subsequent electron acceptors. This is Photosystem II protein D1 from Heterocapsa niei (Dinoflagellate).